The primary structure comprises 622 residues: MAHVRGLQLPGCLALAALCSLVHSQHVFLAPQQARSLLQRVRRANTFLEEVRKGNLERECVEETCSYEEAFEALESSTATDVFWAKYTACETARTPRDKLAACLEGNCAEGLGTNYRGHVNITRSGIECQLWRSRYPHKPEINSTTHPGADLQENFCRNPDSSTTGPWCYTTDPTVRRQECSIPVCGQDQVTVAMTPRSEGSSVNLSPPLEQCVPDRGQQYQGRLAVTTHGLPCLAWASAQAKALSKHQDFNSAVQLVENFCRNPDGDEEGVWCYVAGKPGDFGYCDLNYCEEAVEEETGDGLDEDSDRAIEGRTATSEYQTFFNPRTFGSGEADCGLRPLFEKKSLEDKTERELLESYIDGRIVEGSDAEIGMSPWQVMLFRKSPQELLCGASLISDRWVLTAAHCLLYPPWDKNFTENDLLVRIGKHSRTRYERNIEKISMLEKIYIHPRYNWRENLDRDIALMKLKKPVAFSDYIHPVCLPDRETAASLLQAGYKGRVTGWGNLKETWTANVGKGQPSVLQVVNLPIVERPVCKDSTRIRITDNMFCAGYKPDEGKRGDACEGDSGGPFVMKSPFNNRWYQMGIVSWGEGCDRDGKYGFYTHVFRLKKWIQKVIDQFGE.

An N-terminal signal peptide occupies residues 1-24; it reads MAHVRGLQLPGCLALAALCSLVHS. The propeptide occupies 25 to 43; the sequence is QHVFLAPQQARSLLQRVRR. Residues 44–89 form the Gla domain; it reads ANTFLEEVRKGNLERECVEETCSYEEAFEALESSTATDVFWAKYTA. Glutamate 49, glutamate 50, glutamate 57, glutamate 59, glutamate 62, glutamate 63, glutamate 68, glutamate 69, glutamate 72, and glutamate 75 each carry 4-carboxyglutamate. Cysteine 60 and cysteine 65 are disulfide-bonded. 11 disulfides stabilise this stretch: cysteine 90/cysteine 103, cysteine 108/cysteine 186, cysteine 129/cysteine 169, cysteine 157/cysteine 181, cysteine 213/cysteine 291, cysteine 234/cysteine 274, cysteine 262/cysteine 286, cysteine 336/cysteine 482, cysteine 391/cysteine 407, cysteine 536/cysteine 550, and cysteine 564/cysteine 594. Kringle domains are found at residues 108–186 and 213–291; these read CAEG…IPVC and CVPD…LNYC. 2 N-linked (GlcNAc...) (complex) asparagine glycosylation sites follow: asparagine 121 and asparagine 143. The 255-residue stretch at 364–618 folds into the Peptidase S1 domain; that stretch reads IVEGSDAEIG…LKKWIQKVID (255 aa). Histidine 406 functions as the Charge relay system in the catalytic mechanism. N-linked (GlcNAc...) (complex) asparagine glycosylation occurs at asparagine 416. The Charge relay system role is filled by aspartate 462. The segment at 551–573 is high affinity receptor-binding region which is also known as the TP508 peptide; sequence AGYKPDEGKRGDACEGDSGGPFV. Residue serine 568 is the Charge relay system of the active site.

The protein belongs to the peptidase S1 family. Heterodimer (named alpha-thrombin) of a light and a heavy chain; disulfide-linked. Forms a heterodimer with SERPINA5. In plasma, interacts (via N-terminus) with alpha-1-microglobulin with molar ratio 1:2 and 1:1; this interaction does not prevent the activation of prothrombin to thrombin. Interacts (thrombin) with iripin-8, a serine protease inhibitor from Ixodes ricinus saliva. Interacts (thrombin) with iripin-3, a serine protease inhibitor from Ixodes ricinus saliva. Interacts (thrombin) with Anopheles albimanus salivary thrombin inhibitor anophelin; the interaction results in thrombin inhibition. Interacts (thrombin) with Anopheles gambiae salivary thrombin inhibitor anophelin; the interaction results in thrombin inhibition. Interacts (thrombin) with Amblyomma variegatum variegin; the interaction results in thrombin inhibition. Interacts (thrombin) with Xenopsylla cheopis salivary thrombin inhibitor XC-42. Interacts (thrombin) with Xenopsylla cheopis salivary thrombin inhibitor XC-43. The gamma-carboxyglutamyl residues, which bind calcium ions, result from the carboxylation of glutamyl residues by a microsomal enzyme, the vitamin K-dependent carboxylase. The modified residues are necessary for the calcium-dependent interaction with a negatively charged phospholipid surface, which is essential for the conversion of prothrombin to thrombin. In terms of processing, N-glycosylated. N-glycan heterogeneity at Asn-121: Hex3HexNAc3 (minor), Hex4HexNAc3 (minor) and Hex5HexNAc4 (major). At Asn-143: Hex4HexNAc3 (minor) and Hex5HexNAc4 (major). Post-translationally, in the penultimate step of the coagulation cascade, prothrombin is converted to thrombin by the prothrombinase complex composed of factor Xa (F10), cofactor Va (F5), and phospholipids. This activation requires factor Xa-catalyzed sequential cleavage at 2 sites, Arg-314 and Arg-363, along 2 possible pathways. In the first pathway, the first cleavage occurs at Arg-314, leading to the formation of the inactive intermediate prethrombin-2. This pathway preferentially occurs on platelets and in the absence of cofactor Va. In the second pathway, the first cleavage occurs at Arg-363, which separates protease domain into 2 chains that remain connected through a disulfide bond and generates the active intermediate meizothrombin. The presence of cofactor Va directs activation along the meizothrombin pathway and greatly accelerates the rate of cleavage at Arg-363, but has a smaller effect on the cleavage of meizothrombin at Arg-314. Meizothrombin accumulates as an intermediate when prothrombinase is assembled on the membrane of red blood cells. Expressed by the liver and secreted in plasma.

Its subcellular location is the secreted. It is found in the extracellular space. It carries out the reaction Selective cleavage of Arg-|-Gly bonds in fibrinogen to form fibrin and release fibrinopeptides A and B.. Activity is promoted in the presence of negatively charged surfaces, such as polyphosphate and dextran sulfate. Inhibited by SERPINA5. Functionally, thrombin, which cleaves bonds after Arg and Lys, converts fibrinogen to fibrin and activates factors V, VII, VIII, XIII, and, in complex with thrombomodulin, protein C. Functions in blood homeostasis, inflammation and wound healing. Activates coagulation factor XI (F11); activation is promoted by the contact with negatively charged surfaces. Triggers the production of pro-inflammatory cytokines, such as MCP-1/CCL2 and IL8/CXCL8, in endothelial cells. This Homo sapiens (Human) protein is Prothrombin (F2).